The sequence spans 121 residues: Large ribosomal subunit protein uL18 (121 aa).

The protein belongs to the universal ribosomal protein uL18 family. In terms of assembly, part of the 50S ribosomal subunit; part of the 5S rRNA/L5/L18/L25 subcomplex. Contacts the 5S and 23S rRNAs.

Functionally, this is one of the proteins that bind and probably mediate the attachment of the 5S RNA into the large ribosomal subunit, where it forms part of the central protuberance. The polypeptide is Large ribosomal subunit protein uL18 (Paraburkholderia xenovorans (strain LB400)).